Reading from the N-terminus, the 100-residue chain is Large ribosomal subunit protein bL27 (100 aa).

The propeptide occupies Met-1–Phe-13. A compositionally biased stretch (basic and acidic residues) spans Gly-18–Asn-29. The segment at Gly-18–Asp-39 is disordered.

It belongs to the bacterial ribosomal protein bL27 family. Post-translationally, the N-terminus is cleaved by ribosomal processing cysteine protease Prp.

This is Large ribosomal subunit protein bL27 from Ureaplasma urealyticum serovar 10 (strain ATCC 33699 / Western).